The following is a 461-amino-acid chain: Cysteine--tRNA ligase (461 aa).

Cysteine 28 is a Zn(2+) binding site. A 'HIGH' region motif is present at residues 30–40 (ITVYDLCHIGH). Zn(2+) is bound by residues cysteine 209, histidine 234, and glutamate 238. The 'KMSKS' region motif lies at 266–270 (KMSKS). Lysine 269 provides a ligand contact to ATP.

Belongs to the class-I aminoacyl-tRNA synthetase family. Monomer. Zn(2+) serves as cofactor.

It localises to the cytoplasm. It catalyses the reaction tRNA(Cys) + L-cysteine + ATP = L-cysteinyl-tRNA(Cys) + AMP + diphosphate. The protein is Cysteine--tRNA ligase of Salmonella dublin (strain CT_02021853).